Here is a 997-residue protein sequence, read N- to C-terminus: Pro-apoptotic serine protease NMA111 (997 aa).

The disordered stretch occupies residues 1 to 43; sequence MTISLSNIKKRDHSKISDGTSGESSLVKRKQLESATGDQEEEY. The serine protease stretch occupies residues 83–273; that stretch reads VVSIHFSQVA…LPLDRILRAL (191 aa). Catalysis depends on charge relay system residues His-121, Asp-152, and Ser-235. PDZ domains are found at residues 300–378 and 779–854; these read RRLG…QRGG and EEWI…VRDG.

The protein belongs to the peptidase S1C family. Interacts with BIR1.

It is found in the nucleus. Its function is as follows. Nuclear serine protease which mediates apoptosis through proteolysis of the apoptotic inhibitor BIR1. The sequence is that of Pro-apoptotic serine protease NMA111 (NMA111) from Saccharomyces cerevisiae (strain YJM789) (Baker's yeast).